The primary structure comprises 1040 residues: Protocadherin-10 (1040 aa).

The first 18 residues, 1 to 18 (MIVLLLFALLWMVEGVFS), serve as a signal peptide directing secretion. Cadherin domains follow at residues 19–122 (QLHY…PPSF), 123–250 (PEPD…VPAF), 251–358 (DQPV…APEI), 359–463 (SFST…APRF), 464–574 (SQPV…APAI), and 582–690 (NGTP…GGGG). The Extracellular portion of the chain corresponds to 19–715 (QLHYTVQEEQ…GGGETSLDLT (697 aa)). Residues 207–223 (GGGGGVGEGGGGGGGAG) show a composition bias toward gly residues. A disordered region spans residues 207–228 (GGGGGVGEGGGGGGGAGLPPQQ). A glycan (N-linked (GlcNAc...) asparagine) is linked at Asn-273. Asn-557 is a glycosylation site (N-linked (GlcNAc...) asparagine). Positions 686–697 (QGGGGSGGGGSG) are enriched in gly residues. The disordered stretch occupies residues 686–708 (QGGGGSGGGGSGEHQRPSRSGGG). Residues 716-736 (LILIIALGSVSFIFLLAMIVL) form a helical membrane-spanning segment. Residues 737-1040 (AVRCQKEKKL…PPYLTRKRIC (304 aa)) lie on the Cytoplasmic side of the membrane. Residues 899 to 927 (AFQEADIVSSKDSGHGDSEQGDSDHDATN) are disordered. Basic and acidic residues predominate over residues 910-926 (DSGHGDSEQGDSDHDAT).

In terms of tissue distribution, moderately expressed in all regions of the brain examined, as well as in testis and ovary, and low expression in all other tissues tested.

It localises to the cell membrane. Potential calcium-dependent cell-adhesion protein. Functionally, (Microbial infection) Acts as a receptor for Western equine encephalitis virus. This Homo sapiens (Human) protein is Protocadherin-10 (PCDH10).